The chain runs to 1151 residues: Calcium-activated potassium channel subunit alpha-1 (1151 aa).

The tract at residues 1-36 (MSSNIHANHLSLDASSSSSSSSSSSSSSSSSSSVHE) is disordered. Over 1–59 (MSSNIHANHLSLDASSSSSSSSSSSSSSSSSSSVHEPKMDALIIPVTMEVPCDSRGQRM) the chain is Extracellular. Low complexity predominate over residues 15 to 33 (SSSSSSSSSSSSSSSSSSS). The chain crosses the membrane as a helical span at residues 60 to 80 (WWAFLASSMVTFFGGLFIILL). Topologically, residues 81–151 (WRTLKYLWTV…MISAQTLTGR (71 aa)) are cytoplasmic. 3 S-palmitoyl cysteine lipidation sites follow: Cys-91, Cys-92, and Cys-94. Residues 152–172 (VLVVLVFALSIGALVIYFIDS) form a helical membrane-spanning segment. Residues 173 to 187 (SNPIESCQNFYKDFT) lie on the Extracellular side of the membrane. Residues 188–208 (LQIDMAFNVFFLLYFGLRFIA) traverse the membrane as a helical segment. Topologically, residues 209–212 (ANDK) are cytoplasmic. Residues 213–233 (LWFWLEVNSVVDFFTVPPVFV) traverse the membrane as a helical segment. Residues 234 to 237 (SVYL) are Extracellular-facing. Residues 238–258 (NRSWLGLRFLRALRLIQFSEI) traverse the membrane as a helical; Voltage-sensor segment. Topologically, residues 259 to 273 (LQFLNILKTSNSIKL) are cytoplasmic. Residues 274–294 (VNLLSIFISTWLTAAGFIHLV) form a helical membrane-spanning segment. The Extracellular portion of the chain corresponds to 295-308 (ENSGDPWENFQNNQ). An intramembrane region (pore-forming) is located at residues 309-331 (ALTYWECVYLLMVTMSTVGYGDV). The Selectivity for potassium motif lies at 325–328 (TVGY). Over 332-340 (YAKTTLGRL) the chain is Extracellular. The chain crosses the membrane as a helical span at residues 341-361 (FMVFFILGGLAMFASYVPEII). At 362 to 1151 (ELIGNRKKYG…KQKYVQEERL (790 aa)) the chain is on the cytoplasmic side. Residues 380–522 (RKHIVVCGHI…WNWKEGDDAI (143 aa)) enclose the RCK N-terminal 1 domain. Glu-412, Gln-435, and Glu-437 together coordinate Mg(2+). Residues 529-549 (LGFIAQSCLAQGLSTMLANLF) form a segment S7 region. The interval 586 to 606 (LSFPTVCELCFVKLKLLMIAI) is segment S8. Residues 650 to 654 (CKACH) are heme-binding motif. The tract at residues 674-702 (EQPSTLSPKKKQRNGGMRNSPNSSPKLMR) is disordered. At Thr-678 the chain carries Phosphothreonine. Ser-680, Ser-693, and Ser-697 each carry phosphoserine. The interval 752-772 (VLSGHVVVCIFGDVSSALIGL) is segment S9. The 145-residue stretch at 754–898 (SGHVVVCIFG…MDRSSPDNSP (145 aa)) folds into the RCK N-terminal 2 domain. Residue Thr-885 is modified to Phosphothreonine. 2 positions are modified to phosphoserine: Ser-893 and Ser-897. The Calcium bowl signature appears at 918-940 (TELVNDTNVQFLDQDDDDDPDTE). The Ca(2+) site is built by Gln-927, Asp-930, Asp-933, and Asp-935. A segment S10 region spans residues 947 to 967 (FACGTAFAVSVLDSLMSATYF). Positions 1101–1126 (RASLSHSSHSSQSSSKKSSSVHSIPS) are enriched in low complexity. Residues 1101–1151 (RASLSHSSHSSQSSSKKSSSVHSIPSTANRQNRPKSRESRDKQKYVQEERL) are disordered. Over residues 1135–1151 (KSRESRDKQKYVQEERL) the composition is skewed to basic and acidic residues. A phosphoserine mark is found at Ser-1136 and Ser-1139.

The protein belongs to the potassium channel family. Calcium-activated (TC 1.A.1.3) subfamily. KCa1.1/KCNMA1 sub-subfamily. As to quaternary structure, homotetramer; which constitutes the calcium-activated potassium channel. Interacts with beta subunits KCNMB1, KCNMB2, KCNMB3 and KCNMB4. Interacts with gamma subunits LRRC26, LRRC38, LRRC52 and LRRC55. Beta and gamma subunits are accessory, and modulate its activity. Interacts with RAB11B. Phosphorylated. Phosphorylation by kinases such as PKA and/or PKG. In smooth muscles, phosphorylation affects its activity. In terms of processing, palmitoylation by ZDHHC22 and ZDHHC23 within the intracellular linker between the S0 and S1 transmembrane domains regulates localization to the plasma membrane. Depalmitoylated by LYPLA1 and LYPLAL1, leading to retard exit from the trans-Golgi network.

The protein resides in the cell membrane. The catalysed reaction is K(+)(in) = K(+)(out). With respect to regulation, ethanol and carbon monoxide-bound heme increase channel activation. Heme inhibits channel activation. In terms of biological role, potassium channel activated by both membrane depolarization or increase in cytosolic Ca(2+) that mediates export of K(+). It is also activated by the concentration of cytosolic Mg(2+). Its activation dampens the excitatory events that elevate the cytosolic Ca(2+) concentration and/or depolarize the cell membrane. It therefore contributes to repolarization of the membrane potential. Plays a key role in controlling excitability in a number of systems, such as regulation of the contraction of smooth muscle, the tuning of hair cells in the cochlea, regulation of transmitter release, and innate immunity. In smooth muscles, its activation by high level of Ca(2+), caused by ryanodine receptors in the sarcoplasmic reticulum, regulates the membrane potential. In cochlea cells, its number and kinetic properties partly determine the characteristic frequency of each hair cell and thereby helps to establish a tonotopic map. Kinetics of KCNMA1 channels are determined by alternative splicing, phosphorylation status and its combination with modulating beta subunits. Highly sensitive to both iberiotoxin (IbTx) and charybdotoxin (CTX). The sequence is that of Calcium-activated potassium channel subunit alpha-1 (KCNMA1) from Macaca mulatta (Rhesus macaque).